Consider the following 61-residue polypeptide: Inner membrane protein p12 (61 aa).

Residues 16–36 (LLIVAIIVVIMAIMLYYFWWM) form a helical membrane-spanning segment.

This sequence belongs to the asfivirus inner membrane protein p12 family. Homomultimer; disulfide-linked. Post-translationally, not glycosylated.

The protein resides in the virion membrane. The protein is Inner membrane protein p12 of Ornithodoros (relapsing fever ticks).